The sequence spans 270 residues: tRNA pseudouridine synthase A (270 aa).

The active-site Nucleophile is the Asp-60. The tract at residues Phe-107–Phe-111 is RNA binding. A substrate-binding site is contributed by Tyr-118. The interaction with tRNA stretch occupies residues Gln-168–Arg-172.

This sequence belongs to the tRNA pseudouridine synthase TruA family. In terms of assembly, homodimer.

The catalysed reaction is uridine(38/39/40) in tRNA = pseudouridine(38/39/40) in tRNA. Its function is as follows. Formation of pseudouridine at positions 38, 39 and 40 in the anticodon stem and loop of transfer RNAs. The polypeptide is tRNA pseudouridine synthase A (Shigella sonnei (strain Ss046)).